Consider the following 459-residue polypeptide: MFSLYKKFKGLFYSVLFWLCILSFFSVLNEMVLNVSLPDIANHFNTTPGITNWVNTAYMLTFSIGTAVYGKLSDYINIKKLLIIGISLSCLGSLIAFIGHNHFFILIFGRLVQGVGSAAFPSLIMVVVARNITRKKQGKAFGFIGSIVALGEGLGPSIGGIIAHYIHWSYLLILPMITIVTIPFLIKVMVPGKSTKNTLDIVGIVLMSISIICFMLFTTNYNWTFLILFTIFFVIFIKHISRVSNPFINPKLGKNIPFMLGLFSGGLIFSIVAGFISMVPYMMKTIYHVNVATIGNSVIFPGTMSVIVFGYFGGFLVDRKGSLFVFILGSLSISISFLTIAFFVEFSMWLTTFMFIFVMGGLSFTKTVISKIVSSSLSEEEVASGMSLLNFTSFLSEGTGIAIVGGLLSLQLINRKLVLEFINYSSGVYSNILVAMAILIILCCLLTIIVFKRSEKQFE.

The next 14 helical transmembrane spans lie at 12–34 (FYSV…MVLN), 49–68 (GITN…GTAV), 81–100 (LLII…FIGH), 105–127 (ILIF…IMVV), 140–162 (AFGF…GGII), 166–188 (IHWS…LIKV), 201–218 (IVGI…MLFT), 223–240 (WTFL…IKHI), 261–283 (GLFS…PYMM), 293–315 (TIGN…FGGF), 322–344 (SLFV…AFFV), 348–370 (MWLT…TVIS), 391–413 (FTSF…LQLI), and 428–450 (VYSN…TIIV).

Belongs to the major facilitator superfamily. TCR/Tet family.

The protein resides in the cell membrane. In terms of biological role, resistance to tetracycline by an active tetracycline efflux. This is an energy-dependent process that decreases the accumulation of the antibiotic in whole cells. This protein functions as a metal-tetracycline/H(+) antiporter. The protein is Tetracycline resistance protein (tet) of Staphylococcus aureus.